Here is a 335-residue protein sequence, read N- to C-terminus: Urokinase plasminogen activator surface receptor (335 aa).

The signal sequence occupies residues 1 to 22; sequence MGHPPLLPLLLLLHTCVPASWG. UPAR/Ly6 domains are found at residues 23 to 114, 115 to 213, and 214 to 305; these read LRCM…RSRY, LECI…PQNG, and RQCY…YRSG. Cystine bridges form between Cys-25–Cys-46, Cys-28–Cys-34, and Cys-39–Cys-67. N-linked (GlcNAc...) asparagine glycosylation is present at Asn-74. Disulfide bonds link Cys-93-Cys-98, Cys-117-Cys-144, Cys-120-Cys-127, Cys-137-Cys-169, Cys-175-Cys-192, Cys-193-Cys-198, Cys-216-Cys-244, Cys-219-Cys-227, Cys-237-Cys-263, Cys-269-Cys-287, and Cys-288-Cys-293. Residues Asn-184, Asn-194, Asn-222, and Asn-255 are each glycosylated (N-linked (GlcNAc...) asparagine). The GPI-anchor amidated glycine moiety is linked to residue Gly-305. The propeptide at 306–335 is removed in mature form; the sequence is AAPQPGPAHLSLTITLLMTARLWGGTLLWT.

Monomer. Interacts with MRC2. Interacts (via the UPAR/Ly6 domains) with SRPX2. Interacts with FAP (seprase); the interaction occurs at the cell surface of invadopodia membrane. Interacts with SORL1 (via N-terminal ectodomain); this interaction decreases PLAUR internalization. The ternary complex composed of PLAUR-PLAU-SERPINE1 also interacts with SORL1. Interacts with CD82; this interaction prevents PLAUR from binding to its high affinity ligand PLAU. As to expression, expressed in neurons of the rolandic area of the brain (at protein level). Expressed in the brain.

The protein localises to the cell membrane. It is found in the cell projection. Its subcellular location is the invadopodium membrane. It localises to the secreted. Its function is as follows. Acts as a receptor for urokinase plasminogen activator. Plays a role in localizing and promoting plasmin formation. Mediates the proteolysis-independent signal transduction activation effects of U-PA. It is subject to negative-feedback regulation by U-PA which cleaves it into an inactive form. In Homo sapiens (Human), this protein is Urokinase plasminogen activator surface receptor (PLAUR).